The primary structure comprises 878 residues: Alanine--tRNA ligase (878 aa).

Zn(2+) contacts are provided by H567, H571, C669, and H673.

It belongs to the class-II aminoacyl-tRNA synthetase family. Zn(2+) is required as a cofactor.

The protein localises to the cytoplasm. The enzyme catalyses tRNA(Ala) + L-alanine + ATP = L-alanyl-tRNA(Ala) + AMP + diphosphate. In terms of biological role, catalyzes the attachment of alanine to tRNA(Ala) in a two-step reaction: alanine is first activated by ATP to form Ala-AMP and then transferred to the acceptor end of tRNA(Ala). Also edits incorrectly charged Ser-tRNA(Ala) and Gly-tRNA(Ala) via its editing domain. This Rickettsia conorii (strain ATCC VR-613 / Malish 7) protein is Alanine--tRNA ligase.